The chain runs to 499 residues: Putative DBH-like monooxygenase protein 2 (499 aa).

The N-terminal stretch at Met-1–Gly-16 is a signal peptide. In terms of domain architecture, DOMON spans Asn-40–Gly-156. Residue Tyr-209 is part of the active site. 2 cysteine pairs are disulfide-bonded: Cys-211–Cys-261 and Cys-248–Cys-271. An N-linked (GlcNAc...) asparagine glycan is attached at Asn-236. Positions 241 and 242 each coordinate Cu cation. The N-linked (GlcNAc...) asparagine glycan is linked to Asn-250. Cu cation contacts are provided by His-308, His-389, and His-391. 2 disulfides stabilise this stretch: Cys-365–Cys-480 and Cys-443–Cys-465. His-389 is a catalytic residue. Asn-404 is a glycosylation site (N-linked (GlcNAc...) asparagine). Met-464 provides a ligand contact to Cu cation. The N-linked (GlcNAc...) asparagine glycan is linked to Asn-476.

The protein belongs to the copper type II ascorbate-dependent monooxygenase family. It depends on Cu(2+) as a cofactor.

This is Putative DBH-like monooxygenase protein 2 (MOXD2P) from Homo sapiens (Human).